Consider the following 143-residue polypeptide: MWTDRLYRVEPYRMLFQWVKDEGNGIYSVGMASILAALAYPLYSIKIKPVGTKLEYDEALAIIEAGKRVATFPTPLSGIVVDVNEEVIKNPELINKKPYSSWIAKLKATNLEEVKNLQSAKEIVKTVKDFIILEDVDCSIVEE.

A Lipoyl-binding domain is found at 26–107; the sequence is IYSVGMASIL…PYSSWIAKLK (82 aa). Residue Lys-67 is modified to N6-lipoyllysine.

It belongs to the GcvH family. In terms of assembly, the glycine cleavage system is composed of four proteins: P, T, L and H. (R)-lipoate serves as cofactor.

The glycine cleavage system catalyzes the degradation of glycine. The H protein shuttles the methylamine group of glycine from the P protein to the T protein. The protein is Glycine cleavage system H protein 1 of Aquifex aeolicus (strain VF5).